Consider the following 125-residue polypeptide: Prefoldin subunit beta (125 aa).

It belongs to the prefoldin subunit beta family. Heterohexamer of two alpha and four beta subunits.

It localises to the cytoplasm. Its function is as follows. Molecular chaperone capable of stabilizing a range of proteins. Seems to fulfill an ATP-independent, HSP70-like function in archaeal de novo protein folding. The polypeptide is Prefoldin subunit beta (Pyrobaculum calidifontis (strain DSM 21063 / JCM 11548 / VA1)).